The primary structure comprises 114 residues: uncharacterized protein (114 aa).

The segment at 1–24 (MFGACYKQPLKPSGSEPPAEECRM) is disordered.

As to expression, expressed in kidney and liver.

This is an uncharacterized protein from Homo sapiens (Human).